Consider the following 215-residue polypeptide: MOB kinase activator-like 1B (215 aa).

Residues 1–25 (MSLFGLGRNQKTFRPKKSAPSGTKG) are disordered. 4 residues coordinate Zn(2+): cysteine 79, cysteine 84, histidine 161, and histidine 166.

This sequence belongs to the MOB1/phocein family. Interacts with SIK1. In terms of tissue distribution, expression is detected along the vasculature in cotyledons, hypocotyls and roots of 3- to 4-day-old seedlings.

This chain is MOB kinase activator-like 1B, found in Arabidopsis thaliana (Mouse-ear cress).